Here is a 611-residue protein sequence, read N- to C-terminus: Probable inactive purple acid phosphatase 27 (611 aa).

The N-terminal stretch at 1-18 (MARNFLLVLLWFIVQVSS) is a signal peptide. Asparagine 263 and asparagine 271 each carry an N-linked (GlcNAc...) asparagine glycan. Aspartate 293 contacts Fe cation. A glycan (N-linked (GlcNAc...) asparagine) is linked at asparagine 314. Fe cation-binding residues include aspartate 334 and tyrosine 337. Residue aspartate 334 coordinates Zn(2+). Zn(2+) is bound by residues asparagine 367, histidine 456, and histidine 498. Asparagine 367 contributes to the substrate binding site. 498-500 (HVH) is a binding site for substrate. Residue histidine 500 coordinates Fe cation.

This sequence belongs to the metallophosphoesterase superfamily. Purple acid phosphatase family. As to quaternary structure, homodimer. Requires Fe cation as cofactor. Zn(2+) serves as cofactor. Expressed in roots, stems, leaves, flowers and siliques.

The protein resides in the secreted. The sequence is that of Probable inactive purple acid phosphatase 27 (PAP27) from Arabidopsis thaliana (Mouse-ear cress).